Consider the following 1470-residue polypeptide: Calmodulin-regulated spectrin-associated protein 2 (1470 aa).

A Calponin-homology (CH) domain is found at 222-335; it reads WKLVPARYRK…FMAELFWWFE (114 aa). A disordered region spans residues 374–397; sequence SSSSSDFTSRYTRPQTHSSVSGGI. Over residues 380–390 the composition is skewed to polar residues; it reads FTSRYTRPQTH. 2 positions are modified to phosphoserine: S402 and S404. Phosphothreonine is present on T412. Residues S450, S581, S582, S594, and S656 each carry the phosphoserine modification. Disordered regions lie at residues 580–622 and 648–712; these read QSSP…EDSS and ASNP…EGSE. T661 carries the post-translational modification Phosphothreonine. A Phosphoserine modification is found at S663. A compositionally biased stretch (low complexity) spans 663-682; it reads STKSQPGSSASSSSGVKMTS. A compositionally biased stretch (basic and acidic residues) spans 686 to 696; sequence QKFRKLNHTDG. A coiled-coil region spans residues 739-776; the sequence is LLASEMVHLRMRLEEKRRAIEAQKKKMEAAFTKQRQKM. Positions 796–835 are enriched in basic and acidic residues; it reads REEAAGAEDEKVYTDRAKEKESQKMDGQRSKSLADIKESM. Residues 796 to 864 form a disordered region; that stretch reads REEAAGAEDE…QWNLTSPSEE (69 aa). Position 845 is a phosphoserine (S845). Positions 870 to 909 form a coiled coil; sequence ELLEYTKSIEKLNSSLHFLQQEMQRLSLQQEMLMQMREQQ. The segment at 905-1016 is MBD region; that stretch reads MREQQSWVIS…IQTRSFVCFG (112 aa). S914 and S919 each carry phosphoserine. Disordered regions lie at residues 930–1059 and 1078–1099; these read RQAG…PLES and NEDQ…PTAP. Positions 935–946 are enriched in low complexity; the sequence is SSAAAPFSADSP. A compositionally biased stretch (polar residues) spans 952–971; that stretch reads SPQSSTRKSASFSVKNQRTP. A phosphothreonine mark is found at T979, T984, and T986. Phosphoserine occurs at positions 990 and 1001. The span at 1001 to 1011 shows a compositional bias: polar residues; the sequence is SPSQVPIQTRS. Basic and acidic residues-rich tracts occupy residues 1020–1037 and 1044–1056; these read EPQK…EPSE and SCDH…EVKP. Residues 1086–1098 show a composition bias toward pro residues; sequence TDPPPKPVFPPTA. Position 1129 is a phosphoserine (S1129). A coiled-coil region spans residues 1147–1219; the sequence is KDDQKAENDM…REFIRQEYMR (73 aa). A compositionally biased stretch (basic and acidic residues) spans 1167 to 1233; the sequence is RLRREKETQL…KLMEDMDTVI (67 aa). Positions 1167-1327 are disordered; sequence RLRREKETQL…TTSSVASGTE (161 aa). Positions 1268 to 1280 are enriched in polar residues; the sequence is SSLSLASLNTGDT. Phosphoserine occurs at positions 1294, 1300, and 1302. The span at 1315-1327 shows a compositional bias: polar residues; sequence NASTTSSVASGTE. The CKK domain maps to 1330–1464; the sequence is GPKLYKEPSA…QTKRPVTPKK (135 aa).

The protein belongs to the CAMSAP1 family. Interacts with CAMSAP3. Interacts with KATNA1 and KATNB1; leading to regulate the length of CAMSAP2-decorated microtubule stretches. Interacts with a complex formed by AKAP9 and PDE4DIP; this interaction, which is PDE4DIP isoform-specific, recruits CAMSAP2 to the Golgi. Interacts with MAPRE1/EB1. In terms of tissue distribution, present in the soma, axon, and dendritic shaft of hippocampal neurons (at protein level).

It localises to the cytoplasm. The protein resides in the cytoskeleton. It is found in the golgi apparatus. The protein localises to the cilium basal body. Functionally, key microtubule-organizing protein that specifically binds the minus-end of non-centrosomal microtubules and regulates their dynamics and organization. Specifically recognizes growing microtubule minus-ends and autonomously decorates and stabilizes microtubule lattice formed by microtubule minus-end polymerization. Acts on free microtubule minus-ends that are not capped by microtubule-nucleating proteins or other factors and protects microtubule minus-ends from depolymerization. In addition, it also reduces the velocity of microtubule polymerization. Through the microtubule cytoskeleton, also regulates the organization of cellular organelles including the Golgi and the early endosomes. Essential for the tethering, but not for nucleation of non-centrosomal microtubules at the Golgi: together with Golgi-associated proteins AKAP9 and PDE4DIP, required to tether non-centrosomal minus-end microtubules to the Golgi, an important step for polarized cell movement. Also acts as a regulator of neuronal polarity and development: localizes to non-centrosomal microtubule minus-ends in neurons and stabilizes non-centrosomal microtubules, which is required for neuronal polarity, axon specification and dendritic branch formation. Through the microtubule cytoskeleton, regulates the autophagosome transport. The protein is Calmodulin-regulated spectrin-associated protein 2 of Rattus norvegicus (Rat).